The sequence spans 200 residues: MIALLTGQIAHKSPDHVILDVHGVGYRVMIPFSTYYELPEEGQATLHIHTSVREDAILLYGFRTRTEKSFFQLLISVSGIGPKLARDILSNIQPPQLAAALQQGDLHKLSAIPGIGKKTAERLVLELKDKAGKLDSGSIPAGDAVGRSLPAGSVLDDVSSALVNLGYKDPQVRKVLAELDCAGSASVEEVLKQALKILMK.

The domain I stretch occupies residues 1–63; that stretch reads MIALLTGQIA…EDAILLYGFR (63 aa). The segment at 64–142 is domain II; that stretch reads TRTEKSFFQL…KLDSGSIPAG (79 aa). A flexible linker region spans residues 143-153; that stretch reads DAVGRSLPAGS. The domain III stretch occupies residues 153–200; that stretch reads SVLDDVSSALVNLGYKDPQVRKVLAELDCAGSASVEEVLKQALKILMK.

Belongs to the RuvA family. As to quaternary structure, homotetramer. Forms an RuvA(8)-RuvB(12)-Holliday junction (HJ) complex. HJ DNA is sandwiched between 2 RuvA tetramers; dsDNA enters through RuvA and exits via RuvB. An RuvB hexamer assembles on each DNA strand where it exits the tetramer. Each RuvB hexamer is contacted by two RuvA subunits (via domain III) on 2 adjacent RuvB subunits; this complex drives branch migration. In the full resolvosome a probable DNA-RuvA(4)-RuvB(12)-RuvC(2) complex forms which resolves the HJ.

Its subcellular location is the cytoplasm. Functionally, the RuvA-RuvB-RuvC complex processes Holliday junction (HJ) DNA during genetic recombination and DNA repair, while the RuvA-RuvB complex plays an important role in the rescue of blocked DNA replication forks via replication fork reversal (RFR). RuvA specifically binds to HJ cruciform DNA, conferring on it an open structure. The RuvB hexamer acts as an ATP-dependent pump, pulling dsDNA into and through the RuvAB complex. HJ branch migration allows RuvC to scan DNA until it finds its consensus sequence, where it cleaves and resolves the cruciform DNA. The polypeptide is Holliday junction branch migration complex subunit RuvA (Trichlorobacter lovleyi (strain ATCC BAA-1151 / DSM 17278 / SZ) (Geobacter lovleyi)).